The primary structure comprises 158 residues: 2-C-methyl-D-erythritol 2,4-cyclodiphosphate synthase (158 aa).

Residues Asp-8 and His-10 each coordinate a divalent metal cation. 4-CDP-2-C-methyl-D-erythritol 2-phosphate is bound by residues 8–10 (DVH) and 34–35 (HS). Residue His-42 coordinates a divalent metal cation. Residues 56–58 (DIG), 61–65 (FPDTD), 100–106 (AQRPKMA), 132–135 (TTEE), Phe-139, and Arg-142 contribute to the 4-CDP-2-C-methyl-D-erythritol 2-phosphate site.

Belongs to the IspF family. In terms of assembly, homotrimer. It depends on a divalent metal cation as a cofactor.

It catalyses the reaction 4-CDP-2-C-methyl-D-erythritol 2-phosphate = 2-C-methyl-D-erythritol 2,4-cyclic diphosphate + CMP. Its pathway is isoprenoid biosynthesis; isopentenyl diphosphate biosynthesis via DXP pathway; isopentenyl diphosphate from 1-deoxy-D-xylulose 5-phosphate: step 4/6. Functionally, involved in the biosynthesis of isopentenyl diphosphate (IPP) and dimethylallyl diphosphate (DMAPP), two major building blocks of isoprenoid compounds. Catalyzes the conversion of 4-diphosphocytidyl-2-C-methyl-D-erythritol 2-phosphate (CDP-ME2P) to 2-C-methyl-D-erythritol 2,4-cyclodiphosphate (ME-CPP) with a corresponding release of cytidine 5-monophosphate (CMP). The sequence is that of 2-C-methyl-D-erythritol 2,4-cyclodiphosphate synthase from Pelobacter propionicus (strain DSM 2379 / NBRC 103807 / OttBd1).